Here is a 411-residue protein sequence, read N- to C-terminus: Dual-specificity RNA methyltransferase RlmN (411 aa).

The active-site Proton acceptor is the Glu125. One can recognise a Radical SAM core domain in the interval 131-380 (EEGRGTLCIS…IRTPRGRDIL (250 aa)). A disulfide bond links Cys138 and Cys383. Residues Cys145, Cys149, and Cys152 each coordinate [4Fe-4S] cluster. S-adenosyl-L-methionine contacts are provided by residues 209–210 (GE), Ser241, 263–265 (SLH), and Asn340. The active-site S-methylcysteine intermediate is Cys383.

The protein belongs to the radical SAM superfamily. RlmN family. [4Fe-4S] cluster is required as a cofactor.

The protein resides in the cytoplasm. It carries out the reaction adenosine(2503) in 23S rRNA + 2 reduced [2Fe-2S]-[ferredoxin] + 2 S-adenosyl-L-methionine = 2-methyladenosine(2503) in 23S rRNA + 5'-deoxyadenosine + L-methionine + 2 oxidized [2Fe-2S]-[ferredoxin] + S-adenosyl-L-homocysteine. The enzyme catalyses adenosine(37) in tRNA + 2 reduced [2Fe-2S]-[ferredoxin] + 2 S-adenosyl-L-methionine = 2-methyladenosine(37) in tRNA + 5'-deoxyadenosine + L-methionine + 2 oxidized [2Fe-2S]-[ferredoxin] + S-adenosyl-L-homocysteine. Specifically methylates position 2 of adenine 2503 in 23S rRNA and position 2 of adenine 37 in tRNAs. m2A2503 modification seems to play a crucial role in the proofreading step occurring at the peptidyl transferase center and thus would serve to optimize ribosomal fidelity. In Brucella canis (strain ATCC 23365 / NCTC 10854 / RM-666), this protein is Dual-specificity RNA methyltransferase RlmN.